The sequence spans 124 residues: Killer toxin (124 aa).

The signal sequence occupies residues 1–19; it reads MKVSLVYGLTCFLDATSSA. Positions 20-37 are excised as a propeptide; sequence LPSAMAAANSESSALEKR. 5 cysteine pairs are disulfide-bonded: Cys-45-Cys-55, Cys-48-Cys-108, Cys-64-Cys-94, Cys-85-Cys-102, and Cys-103-Cys-109.

As to quaternary structure, monomer.

The protein resides in the secreted. Its function is as follows. This toxin kills sensitive strains of yeast. The protein is Killer toxin (HSK) of Cyberlindnera saturnus (Yeast).